The following is a 436-amino-acid chain: GTPase Der (436 aa).

EngA-type G domains lie at 4-167 (PTVA…PVEE) and 175-351 (IRFS…ESQN). GTP-binding positions include 10 to 17 (GRPNVGKS), 57 to 61 (DTGGI), 119 to 122 (NKVD), 181 to 188 (GRPNVGKS), 229 to 233 (DTAGM), and 294 to 297 (NKWD). The region spanning 352–436 (KRIPSAVLND…PIHLIARKRK (85 aa)) is the KH-like domain.

It belongs to the TRAFAC class TrmE-Era-EngA-EngB-Septin-like GTPase superfamily. EngA (Der) GTPase family. In terms of assembly, associates with the 50S ribosomal subunit.

In terms of biological role, GTPase that plays an essential role in the late steps of ribosome biogenesis. The protein is GTPase Der of Streptococcus pyogenes serotype M5 (strain Manfredo).